We begin with the raw amino-acid sequence, 106 residues long: ATP-dependent Clp protease adapter protein ClpS (106 aa).

Belongs to the ClpS family. In terms of assembly, binds to the N-terminal domain of the chaperone ClpA.

Functionally, involved in the modulation of the specificity of the ClpAP-mediated ATP-dependent protein degradation. This chain is ATP-dependent Clp protease adapter protein ClpS, found in Vibrio campbellii (strain ATCC BAA-1116).